A 63-amino-acid polypeptide reads, in one-letter code: Large ribosomal subunit protein uL29 (63 aa).

It belongs to the universal ribosomal protein uL29 family.

This chain is Large ribosomal subunit protein uL29, found in Alteromonas mediterranea (strain DSM 17117 / CIP 110805 / LMG 28347 / Deep ecotype).